The following is a 323-amino-acid chain: METPFYHDDVLSGLGSGFAPTSGSSGLLLPFPGGSMMKKDALGLALPEQVAAALKAPGAAAAAAAAAGGEATAGLLGSPEMGMLKLSSPELERLIIQSNGLVTTTPTSGQFLYPKAAASEEQEFAEGFVKALEDLHKQNQLGGGGGPNGGAAAAGGGGGGGGGGGGELPAPGLAPEPPVYANLSTYPAVSYAAEPGPFAAPPPRLPPPPPPPLKDEPQIVPEVPSFGESPPLSPIDMDTQERIKAERKRLRNRIAASKCRKRKLERISRLEEKVKSLKSQNTELASTASLLREQVAQLKQKVLSHVNSGCQLLPQHQHQVPAY.

Disordered stretches follow at residues 138 to 173 (QNQL…APGL) and 197 to 221 (PFAA…QIVP). A compositionally biased stretch (gly residues) spans 141-167 (LGGGGGPNGGAAAAGGGGGGGGGGGGE). The segment covering 198 to 212 (FAAPPPRLPPPPPPP) has biased composition (pro residues). Positions 242–269 (RIKAERKRLRNRIAASKCRKRKLERISR) are basic motif. Positions 242 to 305 (RIKAERKRLR…AQLKQKVLSH (64 aa)) constitute a bZIP domain. The tract at residues 270 to 298 (LEEKVKSLKSQNTELASTASLLREQVAQL) is leucine-zipper.

Belongs to the bZIP family. Jun subfamily. As to quaternary structure, binds DNA as a dimer.

The protein resides in the nucleus. This Gallus gallus (Chicken) protein is Transcription factor JunD (JUND).